A 391-amino-acid polypeptide reads, in one-letter code: Elongation factor Tu (391 aa).

Residues 10 to 201 enclose the tr-type G domain; sequence KPHVNIGTVG…AVDEYIPTPE (192 aa). Residues 19 to 26 form a G1 region; the sequence is GHVDHGKT. Residue 19 to 26 participates in GTP binding; the sequence is GHVDHGKT. Mg(2+) is bound at residue Thr26. Residues 55-59 form a G2 region; it reads GITIS. A G3 region spans residues 76–79; it reads DCPG. GTP is bound by residues 76 to 80 and 131 to 134; these read DCPGH and NKVD. Residues 131–134 are G4; it reads NKVD. Residues 169–171 form a G5 region; it reads SAL.

It belongs to the TRAFAC class translation factor GTPase superfamily. Classic translation factor GTPase family. EF-Tu/EF-1A subfamily. Monomer.

The protein localises to the cytoplasm. The enzyme catalyses GTP + H2O = GDP + phosphate + H(+). Functionally, GTP hydrolase that promotes the GTP-dependent binding of aminoacyl-tRNA to the A-site of ribosomes during protein biosynthesis. The chain is Elongation factor Tu from Ruegeria sp. (strain TM1040) (Silicibacter sp.).